Reading from the N-terminus, the 527-residue chain is G patch domain-containing protein 2 (527 aa).

The interval 35–135 (LEESSEQARG…RPSSNLSSSV (101 aa)) is disordered. Residues 62–76 (RQARKRRGRKRRSYN) are compositionally biased toward basic residues. Basic and acidic residues predominate over residues 97–116 (EPSKDYREKHSNNKKDRSDS). Residues serine 114, serine 116, and serine 145 each carry the phosphoserine modification. Disordered regions lie at residues 175–281 (SSKR…GDDE), 350–375 (TPSKNIKKSSGAPPSMLSAPGPGSNK), and 480–527 (TPGS…GNPA). The segment covering 186–196 (GCRDQDMDNDR) has biased composition (basic and acidic residues). Basic residues predominate over residues 206–215 (KKVKKRKLKG). Over residues 231–257 (SEERSQPNKDRMEYEEQKASDELRSES) the composition is skewed to basic and acidic residues. Positions 466 to 512 (ESNIGNRMLQSMGWTPGSGLGRDGRGIAEPVQAVQRPKGLGLGFPLP) constitute a G-patch domain. Residues 510-527 (PLPKSSPTSPAPTSGNPA) show a composition bias toward low complexity.

In terms of assembly, interacts with DHX15.

The protein resides in the nucleus speckle. The protein localises to the nucleus. Its subcellular location is the nucleolus. Functionally, enhances the ATPase activity of DHX15 in vitro. This chain is G patch domain-containing protein 2 (Gpatch2), found in Mus musculus (Mouse).